A 537-amino-acid chain; its full sequence is Lysine--tRNA ligase (537 aa).

The 'HIGH' region motif lies at 30 to 38; that stretch reads PSGNIHIGN. The short motif at 276 to 280 is the 'KMSKS' region element; sequence AMSSS.

It belongs to the class-I aminoacyl-tRNA synthetase family.

Its subcellular location is the cytoplasm. It catalyses the reaction tRNA(Lys) + L-lysine + ATP = L-lysyl-tRNA(Lys) + AMP + diphosphate. The protein is Lysine--tRNA ligase of Methanosarcina barkeri (strain Fusaro / DSM 804).